The chain runs to 777 residues: Protein argonaute (777 aa).

An N-terminal domain region spans residues 1–107 (MAPVQAADEM…ARLDDALEEA (107 aa)). Residues 108-182 (LPKYAAVKKR…TIGMRYDIEA (75 aa)) are linker L1. The PAZ domain stretch occupies residues 183–243 (SLRDLLEAGI…VNVNDAKLEG (61 aa)). A linker L2 region spans residues 244–341 (SKENFTRCLS…DRTGAKSAEY (98 aa)). Positions 342 to 509 (AWRGLSQFGP…SIATYAKLNG (168 aa)) are mid domain. In terms of domain architecture, Piwi spans 445–757 (GIVVLFEDHA…IAELLGRLKS (313 aa)). Residues 510–777 (TPWTVNHDKA…IKLKWSRWFL (268 aa)) form a PIWI domain region. Mg(2+) is bound at residue L777.

This sequence belongs to the argonaute family. Long pAgo subfamily. It depends on Mg(2+) as a cofactor.

Functionally, a catalytically inactive argonaute protein. Binds 5'-phosphorylated RNA as the guide (gRNA) and short DNA as target DNA (tDNA); does not bind other nucleic acid combinations, does not bind tDNA alone. Has highest affinity for gRNA that begins with 5'-phospho-U and poor affinity for gRNA with 5'-OH. Upon expression in E.coli, plasmid sequences are found in RsAgo, its induction leads to plasmid degradation and suppression of genes encoded on foreign plasmids, suggesting it may also interfere with transcription. Does not interact with preformed gRNA:tDNA duplexes. Mismatches and nt bulges are tolerated in the ternary complex, however, they significantly reduce the affinity of RsAgo:gRNA for tDNA. Mismatched tDNA can cause dissociation of gRNA from RsAgo. In situ binds 2 populations of RNA (15-19 and 45 nucleotides, nt) and a population of ssDNA 22-24 nt in length. The small sense RNA is probably derived from mRNA degradation and strongly enriched for U in the first and U/C in the second positions. The small DNA is enriched for sequences complementary to the RNA, with 3 nt overhangs on both ends; another nuclease may trim the ends. The sequences are largely derived from exogenous plasmids or genome-encoded foreign elements such as prophages and transposons. Forms a ternary complex with gRNA and double-stranded tDNA only when the tDNA is open. In Cereibacter sphaeroides (strain ATCC 17025 / ATH 2.4.3) (Rhodobacter sphaeroides), this protein is Protein argonaute.